The chain runs to 490 residues: Tryptophan decarboxylase (490 aa).

Residue Lys-306 is modified to N6-(pyridoxal phosphate)lysine.

This sequence belongs to the group II decarboxylase family. In terms of assembly, homodimer. It depends on pyridoxal 5'-phosphate as a cofactor.

The protein localises to the cytoplasm. It carries out the reaction L-tryptophan + H(+) = tryptamine + CO2. Inhibited by (S)-alpha-fluoromethyltryptophan. Catalyzes the decarboxylation of tryptophan to tryptamine. Tryptamine is a neurotransmitter that induces the release of serotonin, which is suggested to modulate gastrointestinal motility. Therefore, the tryptophan decarboxylase from the gut bacteria Ruminococcus gnavus (strain ATCC 29149 / VPI C7-9) may influence host brain and behavior. Has weak activity with tyrosine and phenylalanine. This chain is Tryptophan decarboxylase, found in Mediterraneibacter gnavus (strain ATCC 29149 / DSM 114966 / JCM 6515 / VPI C7-9) (Ruminococcus gnavus).